The sequence spans 207 residues: High frequency lysogenization protein HflD homolog (207 aa).

This sequence belongs to the HflD family.

It localises to the cytoplasm. The protein localises to the cell inner membrane. The polypeptide is High frequency lysogenization protein HflD homolog (Pseudomonas fluorescens (strain SBW25)).